A 194-amino-acid chain; its full sequence is Large ribosomal subunit protein eL15 (194 aa).

The segment at 160–194 (RGLTSAGKKGRGLMYKGKGAEKVRPSVRANSKKAK) is disordered.

The protein belongs to the eukaryotic ribosomal protein eL15 family.

This Methanococcus maripaludis (strain C6 / ATCC BAA-1332) protein is Large ribosomal subunit protein eL15.